Here is a 689-residue protein sequence, read N- to C-terminus: UvrABC system protein B (689 aa).

Positions 1 to 26 (MSDASGPLQPDRPEADVPFRVEAPFD) are disordered. Residues 40–422 (AGYEQGAQQQ…ERAQSANVVE (383 aa)) form the Helicase ATP-binding domain. Position 53–60 (53–60 (GVTGSGKT)) interacts with ATP. A Beta-hairpin motif is present at residues 106 to 129 (YYNYYQPEAYVEQTDKYIEKDASI). A Helicase C-terminal domain is found at 443–605 (QVEDLMDRID…TTPTTIEKAV (163 aa)). A UVR domain is found at 632–667 (ALLVEDLEARMEDAASNLEFELAADIRDRMRELREA). Positions 668–689 (FDLDGGDAPEDPGGVAPETEDW) are disordered.

This sequence belongs to the UvrB family. As to quaternary structure, forms a heterotetramer with UvrA during the search for lesions. Interacts with UvrC in an incision complex.

Its subcellular location is the cytoplasm. The UvrABC repair system catalyzes the recognition and processing of DNA lesions. A damage recognition complex composed of 2 UvrA and 2 UvrB subunits scans DNA for abnormalities. Upon binding of the UvrA(2)B(2) complex to a putative damaged site, the DNA wraps around one UvrB monomer. DNA wrap is dependent on ATP binding by UvrB and probably causes local melting of the DNA helix, facilitating insertion of UvrB beta-hairpin between the DNA strands. Then UvrB probes one DNA strand for the presence of a lesion. If a lesion is found the UvrA subunits dissociate and the UvrB-DNA preincision complex is formed. This complex is subsequently bound by UvrC and the second UvrB is released. If no lesion is found, the DNA wraps around the other UvrB subunit that will check the other stand for damage. In Halobacterium salinarum (strain ATCC 700922 / JCM 11081 / NRC-1) (Halobacterium halobium), this protein is UvrABC system protein B.